The primary structure comprises 170 residues: Adenine phosphoribosyltransferase (170 aa).

It belongs to the purine/pyrimidine phosphoribosyltransferase family. In terms of assembly, homodimer.

It is found in the cytoplasm. The enzyme catalyses AMP + diphosphate = 5-phospho-alpha-D-ribose 1-diphosphate + adenine. It participates in purine metabolism; AMP biosynthesis via salvage pathway; AMP from adenine: step 1/1. In terms of biological role, catalyzes a salvage reaction resulting in the formation of AMP, that is energically less costly than de novo synthesis. This chain is Adenine phosphoribosyltransferase, found in Enterococcus faecalis (strain ATCC 700802 / V583).